The following is a 29-amino-acid chain: NAD(P)H-quinone oxidoreductase subunit 5, chloroplastic (29 aa).

Residues 1 to 15 (SGSIIHSMEANVGYS) traverse the membrane as a helical segment.

It belongs to the complex I subunit 5 family. In terms of assembly, NDH is composed of at least 16 different subunits, 5 of which are encoded in the nucleus.

It is found in the plastid. It localises to the chloroplast thylakoid membrane. It catalyses the reaction a plastoquinone + NADH + (n+1) H(+)(in) = a plastoquinol + NAD(+) + n H(+)(out). It carries out the reaction a plastoquinone + NADPH + (n+1) H(+)(in) = a plastoquinol + NADP(+) + n H(+)(out). NDH shuttles electrons from NAD(P)H:plastoquinone, via FMN and iron-sulfur (Fe-S) centers, to quinones in the photosynthetic chain and possibly in a chloroplast respiratory chain. The immediate electron acceptor for the enzyme in this species is believed to be plastoquinone. Couples the redox reaction to proton translocation, and thus conserves the redox energy in a proton gradient. The protein is NAD(P)H-quinone oxidoreductase subunit 5, chloroplastic of Pseudotsuga menziesii (Douglas-fir).